The primary structure comprises 415 residues: Dibenzothiophene monooxygenase (415 aa).

FMN is bound by residues Tyr-94, Asn-127 to Asn-132, Lys-157 to Ser-161, Arg-280, Ile-365 to Gly-366, and Thr-387. Residues Ser-129–Lys-140 form a lid loop region.

It belongs to the DszC flavin monooxygenase family. In terms of assembly, homotetramer.

It is found in the cytoplasm. The catalysed reaction is dibenzothiophene + 2 FMNH2 + 2 O2 = dibenzothiophene 5,5-dioxide + 2 FMN + 2 H2O + 2 H(+). It catalyses the reaction dibenzothiophene + FMNH2 + O2 = dibenzothiophene 5-oxide + FMN + H2O + H(+). It carries out the reaction dibenzothiophene 5-oxide + FMNH2 + O2 = dibenzothiophene 5,5-dioxide + FMN + H2O + H(+). It functions in the pathway sulfur metabolism; dibenzothiophene degradation. With respect to regulation, inhibited at high concentrations of FMN or FAD. Catalyzes the first step of the '4S' desulfurization pathway that removes covalently bound sulfur from dibenzothiophene (DBT) without breaking carbon-carbon bonds. Sulfur dioxygenase which converts DBT to DBT-sulfone (DBTO2 or DBT 5,5-dioxide) probably in a stepwise manner. In addition to FMNH2 can also use FAD (although FAD is less efficient). This chain is Dibenzothiophene monooxygenase, found in Mycolicibacterium goodii (Mycobacterium goodii).